The following is a 190-amino-acid chain: ATP synthase subunit b (190 aa).

A helical transmembrane segment spans residues 4–24; sequence ILAPVLSLVLIAGVASPALAA.

It belongs to the ATPase B chain family. As to quaternary structure, F-type ATPases have 2 components, F(1) - the catalytic core - and F(0) - the membrane proton channel. F(1) has five subunits: alpha(3), beta(3), gamma(1), delta(1), epsilon(1). F(0) has three main subunits: a(1), b(2) and c(10-14). The alpha and beta chains form an alternating ring which encloses part of the gamma chain. F(1) is attached to F(0) by a central stalk formed by the gamma and epsilon chains, while a peripheral stalk is formed by the delta and b chains.

Its subcellular location is the cell inner membrane. Its function is as follows. F(1)F(0) ATP synthase produces ATP from ADP in the presence of a proton or sodium gradient. F-type ATPases consist of two structural domains, F(1) containing the extramembraneous catalytic core and F(0) containing the membrane proton channel, linked together by a central stalk and a peripheral stalk. During catalysis, ATP synthesis in the catalytic domain of F(1) is coupled via a rotary mechanism of the central stalk subunits to proton translocation. In terms of biological role, component of the F(0) channel, it forms part of the peripheral stalk, linking F(1) to F(0). This chain is ATP synthase subunit b, found in Ruegeria pomeroyi (strain ATCC 700808 / DSM 15171 / DSS-3) (Silicibacter pomeroyi).